A 302-amino-acid chain; its full sequence is uncharacterized protein (302 aa).

The region spanning 13–89 (QTLFKFLKKT…VNLDIVYEDN (77 aa)) is the S4 RNA-binding domain. The active site involves Asp-141.

Belongs to the pseudouridine synthase RluA family.

The catalysed reaction is a uridine in RNA = a pseudouridine in RNA. This is an uncharacterized protein from Mycoplasma capricolum subsp. capricolum (strain California kid / ATCC 27343 / NCTC 10154).